Consider the following 663-residue polypeptide: Probable serine/threonine-protein kinase DDB_G0283301 (663 aa).

Residues 312-586 form the Protein kinase domain; the sequence is IERRNELGRG…EECVERLITL (275 aa). ATP contacts are provided by residues 318–326 and Lys-348; that span reads LGRGGNGTV. Asp-440 functions as the Proton acceptor in the catalytic mechanism.

The protein belongs to the protein kinase superfamily. Ser/Thr protein kinase family.

It carries out the reaction L-seryl-[protein] + ATP = O-phospho-L-seryl-[protein] + ADP + H(+). The catalysed reaction is L-threonyl-[protein] + ATP = O-phospho-L-threonyl-[protein] + ADP + H(+). The sequence is that of Probable serine/threonine-protein kinase DDB_G0283301 from Dictyostelium discoideum (Social amoeba).